Reading from the N-terminus, the 330-residue chain is Daunorubicin/doxorubicin resistance ATP-binding protein DrrA (330 aa).

The 231-residue stretch at 9–239 (IETSGLVKVY…LGSNVLRLRL (231 aa)) folds into the ABC transporter domain. 41 to 48 (GPNGAGKS) contributes to the ATP binding site.

The protein belongs to the ABC transporter superfamily. Drug exporter-1 (DrugE1) (TC 3.A.1.105) family. The complex is composed of two ATP-binding proteins (DrrA) and two transmembrane proteins (DrrB).

It localises to the cell membrane. It catalyses the reaction daunorubicin(in) + ATP + H2O = daunorubicin(out) + ADP + phosphate + H(+). In terms of biological role, part of the ABC transporter complex DrrAB involved in daunorubicin and doxorubicin resistance. Responsible for energy coupling to the transport system. Binds ATP or GTP. In Streptomyces peucetius, this protein is Daunorubicin/doxorubicin resistance ATP-binding protein DrrA (drrA).